The sequence spans 455 residues: Nuclear mRNA export protein THP1 (455 aa).

A PCI domain is found at isoleucine 220–methionine 431.

Heterodimer with THP1. The SAC3-THP1 complex interacts with CDC31 and SUS1, and with the mRNA export factor MEX67-MTR2, the TREX complex component SUB2, and the nucleoporin NUP1.

The protein localises to the nucleus envelope. Component of the SAC3-THP1 complex, which functions in transcription-coupled mRNA export from the nucleus to the cytoplasm. SAC3-THP1 functions in docking export-competent ribonucleoprotein particles (mRNPs) to the nuclear entrance of the nuclear pore complex (nuclear basket), by association with components of the nuclear mRNA export machinery (MEX67-MTR2 and SUB2) in the nucleoplasm and the nucleoporin NUP1 at the nuclear basket. THP1 binds to RNA in vitro. The chain is Nuclear mRNA export protein THP1 (THP1) from Saccharomyces cerevisiae (strain ATCC 204508 / S288c) (Baker's yeast).